Consider the following 229-residue polypeptide: Ras-related protein RABA6b (229 aa).

A GTP-binding site is contributed by 20–27; it reads GDSAVGKS. An Effector region motif is present at residues 42 to 50; sequence SKPTIGVDF. GTP is bound by residues 68–72, 126–129, and 156–157; these read DTAGQ, NKSD, and SA. Residues Cys-226 and Cys-227 are each lipidated (S-geranylgeranyl cysteine).

This sequence belongs to the small GTPase superfamily. Rab family.

Its subcellular location is the cell membrane. In terms of biological role, intracellular vesicle trafficking and protein transport. The sequence is that of Ras-related protein RABA6b (RABA6B) from Arabidopsis thaliana (Mouse-ear cress).